We begin with the raw amino-acid sequence, 256 residues long: Tryptophan synthase alpha chain (256 aa).

Catalysis depends on proton acceptor residues Glu-44 and Asp-55.

The protein belongs to the TrpA family. As to quaternary structure, tetramer of two alpha and two beta chains.

The enzyme catalyses (1S,2R)-1-C-(indol-3-yl)glycerol 3-phosphate + L-serine = D-glyceraldehyde 3-phosphate + L-tryptophan + H2O. The protein operates within amino-acid biosynthesis; L-tryptophan biosynthesis; L-tryptophan from chorismate: step 5/5. In terms of biological role, the alpha subunit is responsible for the aldol cleavage of indoleglycerol phosphate to indole and glyceraldehyde 3-phosphate. The polypeptide is Tryptophan synthase alpha chain (Coxiella burnetii (strain CbuK_Q154) (Coxiella burnetii (strain Q154))).